Consider the following 198-residue polypeptide: UPF0301 protein BDI_1431 (198 aa).

It belongs to the UPF0301 (AlgH) family.

The chain is UPF0301 protein BDI_1431 from Parabacteroides distasonis (strain ATCC 8503 / DSM 20701 / CIP 104284 / JCM 5825 / NCTC 11152).